The following is a 403-amino-acid chain: Phosphoglycerate kinase (403 aa).

Substrate contacts are provided by residues 21–23, arginine 36, 59–62, arginine 119, and arginine 159; these read DFN and HLGR. ATP is bound by residues lysine 214, glycine 301, glutamate 332, and 359–362; that span reads GGDS.

It belongs to the phosphoglycerate kinase family. In terms of assembly, monomer.

It localises to the cytoplasm. The enzyme catalyses (2R)-3-phosphoglycerate + ATP = (2R)-3-phospho-glyceroyl phosphate + ADP. Its pathway is carbohydrate degradation; glycolysis; pyruvate from D-glyceraldehyde 3-phosphate: step 2/5. The sequence is that of Phosphoglycerate kinase from Lactobacillus delbrueckii subsp. lactis.